The sequence spans 306 residues: Agmatinase (306 aa).

The Mn(2+) site is built by His126, Asp149, His151, Asp153, Asp230, and Asp232.

It belongs to the arginase family. Agmatinase subfamily. It depends on Mn(2+) as a cofactor.

The catalysed reaction is agmatine + H2O = urea + putrescine. It participates in amine and polyamine biosynthesis; putrescine biosynthesis via agmatine pathway; putrescine from agmatine: step 1/1. Catalyzes the formation of putrescine from agmatine. The polypeptide is Agmatinase (Shigella boydii serotype 18 (strain CDC 3083-94 / BS512)).